The chain runs to 385 residues: Succinate--CoA ligase [ADP-forming] subunit beta (385 aa).

The ATP-grasp domain maps to 9-243 (KEILSAYGIP…YSQLDTLEIN (235 aa)). ATP-binding positions include Lys45, 52–54 (GRG), Glu98, Val101, and Glu106. Residues Asn198 and Asp212 each coordinate Mg(2+). Substrate contacts are provided by residues Asn263 and 320 to 322 (GIM).

The protein belongs to the succinate/malate CoA ligase beta subunit family. As to quaternary structure, heterotetramer of two alpha and two beta subunits. Requires Mg(2+) as cofactor.

It carries out the reaction succinate + ATP + CoA = succinyl-CoA + ADP + phosphate. The catalysed reaction is GTP + succinate + CoA = succinyl-CoA + GDP + phosphate. The protein operates within carbohydrate metabolism; tricarboxylic acid cycle; succinate from succinyl-CoA (ligase route): step 1/1. In terms of biological role, succinyl-CoA synthetase functions in the citric acid cycle (TCA), coupling the hydrolysis of succinyl-CoA to the synthesis of either ATP or GTP and thus represents the only step of substrate-level phosphorylation in the TCA. The beta subunit provides nucleotide specificity of the enzyme and binds the substrate succinate, while the binding sites for coenzyme A and phosphate are found in the alpha subunit. The chain is Succinate--CoA ligase [ADP-forming] subunit beta from Geobacter sulfurreducens (strain ATCC 51573 / DSM 12127 / PCA).